The sequence spans 917 residues: Hexokinase-1 (917 aa).

Methionine 1 bears the N-acetylmethionine mark. Residues 1-10 (MIAAQLLAYY) are mitochondrial-binding peptide (MBP). Hexokinase domains lie at 16–458 (DDQV…MVTA) and 464–906 (AEQH…LITA). Residues arginine 30 and 84–89 (DLGGSS) each bind ATP. The hexokinase small subdomain 1 stretch occupies residues 73-207 (DGSEKGDFIA…DYDANIVAVV (135 aa)). 84–91 (DLGGSSFR) lines the D-glucose 6-phosphate pocket. Residues serine 155, 172–173 (TK), and 208–209 (ND) each bind D-glucose. Positions 208 to 447 (NDTVGTMMTC…SDVRFLLSES (240 aa)) are hexokinase large subdomain 1. D-glucose 6-phosphate contacts are provided by aspartate 209 and threonine 232. D-glucose contacts are provided by residues asparagine 235, glutamate 260, and 291–294 (QLFE). The residue at position 337 (serine 337) is a Phosphoserine. An ATP-binding site is contributed by asparagine 345. 413–415 (DGS) is a D-glucose 6-phosphate binding site. 425 to 426 (RR) is a binding site for ATP. D-glucose 6-phosphate contacts are provided by residues serine 449 and 532 to 536 (DLGGT). Residues 521–655 (DGTENGDFLA…EFDLDVVAVV (135 aa)) form a hexokinase small subdomain 2 region. 532–537 (DLGGTN) lines the ATP pocket. Residues 603–604 (SF), 620–621 (TK), and 656–657 (ND) each bind D-glucose. The hexokinase large subdomain 2 stretch occupies residues 656–895 (NDTVGTMMTC…CNVSFLLSED (240 aa)). Residues aspartate 657 and threonine 680 each contribute to the D-glucose 6-phosphate site. Threonine 680 serves as a coordination point for ATP. D-glucose-binding positions include 682–683 (SN), glutamate 708, and glutamate 742. ATP contacts are provided by residues 747 to 748 (GM), 784 to 788 (TKFLS), and 863 to 867 (TLYKL). D-glucose 6-phosphate-binding positions include 861-863 (DGT) and serine 897.

The protein belongs to the hexokinase family. Monomer. Interacts with RABL2/RABL2A; binds preferentially to GTP-bound RABL2. Interacts with VDAC1. The HK1-VDAC1 complex interacts with ATF2. Interacts (via N-terminal spermatogenic cell-specific region) with PFKM (via C-terminus). Interacts with SMAD5.

The protein localises to the mitochondrion outer membrane. It is found in the cytoplasm. Its subcellular location is the cytosol. The catalysed reaction is a D-hexose + ATP = a D-hexose 6-phosphate + ADP + H(+). The enzyme catalyses D-fructose + ATP = D-fructose 6-phosphate + ADP + H(+). It catalyses the reaction D-glucose + ATP = D-glucose 6-phosphate + ADP + H(+). It carries out the reaction D-mannose + ATP = D-mannose 6-phosphate + ADP + H(+). The catalysed reaction is D-glucosamine + ATP = D-glucosamine 6-phosphate + ADP + H(+). The protein operates within carbohydrate metabolism; hexose metabolism. It participates in carbohydrate degradation; glycolysis; D-glyceraldehyde 3-phosphate and glycerone phosphate from D-glucose: step 1/4. With respect to regulation, hexokinase is an allosteric enzyme inhibited by its product D-glucose 6-phosphate. Hexokinase activity is inhibited by N-acetyl-D-glucosamine. Its function is as follows. Catalyzes the phosphorylation of various hexoses, such as D-glucose, D-glucosamine, D-fructose, D-mannose and 2-deoxy-D-glucose, to hexose 6-phosphate (D-glucose 6-phosphate, D-glucosamine 6-phosphate, D-fructose 6-phosphate, D-mannose 6-phosphate and 2-deoxy-D-glucose 6-phosphate, respectively). Does not phosphorylate N-acetyl-D-glucosamine. Mediates the initial step of glycolysis by catalyzing phosphorylation of D-glucose to D-glucose 6-phosphate. Involved in innate immunity and inflammation by acting as a pattern recognition receptor for bacterial peptidoglycan. When released in the cytosol, N-acetyl-D-glucosamine component of bacterial peptidoglycan inhibits the hexokinase activity of HK1 and causes its dissociation from mitochondrial outer membrane, thereby activating the NLRP3 inflammasome. This Pongo abelii (Sumatran orangutan) protein is Hexokinase-1.